We begin with the raw amino-acid sequence, 400 residues long: Spaetzle-processing enzyme (400 aa).

The first 27 residues, 1–27, serve as a signal peptide directing secretion; sequence MASTERNFLLLSLVVSALSGLVHRSDA. Positions 34-94 constitute a Clip domain; sequence SCTPQQSDER…GLVNRILVCC (61 aa). 6 cysteine pairs are disulfide-bonded: Cys35/Cys93, Cys46/Cys77, Cys52/Cys94, Cys127/Cys269, Cys166/Cys182, and Cys211/Cys221. The Peptidase S1 domain maps to 135–399; it reads IFGGTNTTLW…FIDWIKQKLE (265 aa). N-linked (GlcNAc...) asparagine glycosylation is present at Asn140. His181 functions as the Charge relay system in the catalytic mechanism. Ca(2+)-binding residues include Glu202, Asp204, Thr207, and Asp210. The active-site Charge relay system is the Asp249. Asn311 carries an N-linked (GlcNAc...) asparagine glycan. Intrachain disulfides connect Cys315–Cys332 and Cys342–Cys375. The Charge relay system role is filled by Ser346.

The protein belongs to the peptidase S1 family. CLIP subfamily. In the active form, heterodimer of a light chain and a heavy chain; disulfide-linked. Post-translationally, proteolytically cleaved in response to Gram-negative bacterial or fungal infection; processing is likely to result in its activation. Cleavage produces a light chain containing the CLIP domain and a catalytic heavy chain which remain covalently associated through an interchain disulfide bond.

The protein resides in the secreted. Endopeptidase which plays a key role in innate immunity by cleaving Tl ligand spz and thereby activating the Toll pathway in response to fungal and Gram-positive bacterial infections. Acts downstream of pathogen recognition receptors PGRP-SA and GNBP1 and protease grass in response to Gram-positive bacterial infection. Acts downstream of protease psh in response to fungal infection. The sequence is that of Spaetzle-processing enzyme from Drosophila melanogaster (Fruit fly).